We begin with the raw amino-acid sequence, 714 residues long: Methylmalonyl-CoA mutase (714 aa).

The B12-binding domain occupies 584-714 (RPRILIAKMG…VLNLISQHHD (131 aa)). Residue H597 participates in adenosylcob(III)alamin binding.

This sequence belongs to the methylmalonyl-CoA mutase family. In terms of assembly, homodimer. Interacts with ArgK. The cofactor is adenosylcob(III)alamin.

The catalysed reaction is (R)-methylmalonyl-CoA = succinyl-CoA. In terms of biological role, catalyzes the interconversion of succinyl-CoA and methylmalonyl-CoA. Could be part of a pathway that converts succinate to propionate. This is Methylmalonyl-CoA mutase (scpA) from Escherichia coli (strain K12).